The chain runs to 938 residues: Isoleucine--tRNA ligase (938 aa).

The 'HIGH' region motif lies at P58–H68. L-isoleucyl-5'-AMP is bound at residue E563. The 'KMSKS' region motif lies at K604–S608. K607 is an ATP binding site. Residues C903, C906, C921, and C924 each coordinate Zn(2+).

It belongs to the class-I aminoacyl-tRNA synthetase family. IleS type 1 subfamily. Monomer. Zn(2+) serves as cofactor.

Its subcellular location is the cytoplasm. The enzyme catalyses tRNA(Ile) + L-isoleucine + ATP = L-isoleucyl-tRNA(Ile) + AMP + diphosphate. Functionally, catalyzes the attachment of isoleucine to tRNA(Ile). As IleRS can inadvertently accommodate and process structurally similar amino acids such as valine, to avoid such errors it has two additional distinct tRNA(Ile)-dependent editing activities. One activity is designated as 'pretransfer' editing and involves the hydrolysis of activated Val-AMP. The other activity is designated 'posttransfer' editing and involves deacylation of mischarged Val-tRNA(Ile). This chain is Isoleucine--tRNA ligase, found in Buchnera aphidicola subsp. Schizaphis graminum (strain Sg).